The following is a 148-amino-acid chain: Large ribosomal subunit protein bL9 (148 aa).

This sequence belongs to the bacterial ribosomal protein bL9 family.

Its function is as follows. Binds to the 23S rRNA. The polypeptide is Large ribosomal subunit protein bL9 (Hydrogenobaculum sp. (strain Y04AAS1)).